The following is a 237-amino-acid chain: MKVQRGDTGKAVVVLSGGMDSTVCATLAVREYGAENIGALHVSYGQRTAAREKQAFAAVAERLGIQTRLAVETPFFRAIGGSALTDANIAVPDAGELIGHEIPVTYVPFRNAHLLAMAVSWAEVLGASKIYIGAVAQDSSGYPDCRPEFYEAYNLAVRRGTKAGDIEVVTPLIALRKHEIVSLGLELGAPFDLTWSCYSREDCACGVCDSCVLRLRAFEGAGAVDPVPYAPRLAGHD.

Leucine 15 to alanine 25 is a binding site for ATP. Residues cysteine 197, cysteine 205, cysteine 208, and cysteine 211 each contribute to the Zn(2+) site.

Belongs to the QueC family. It depends on Zn(2+) as a cofactor.

The enzyme catalyses 7-carboxy-7-deazaguanine + NH4(+) + ATP = 7-cyano-7-deazaguanine + ADP + phosphate + H2O + H(+). It participates in purine metabolism; 7-cyano-7-deazaguanine biosynthesis. In terms of biological role, catalyzes the ATP-dependent conversion of 7-carboxy-7-deazaguanine (CDG) to 7-cyano-7-deazaguanine (preQ(0)). This is 7-cyano-7-deazaguanine synthase from Koribacter versatilis (strain Ellin345).